Consider the following 57-residue polypeptide: Large ribosomal subunit protein bL32 (57 aa).

The protein belongs to the bacterial ribosomal protein bL32 family.

This chain is Large ribosomal subunit protein bL32, found in Streptomyces avermitilis (strain ATCC 31267 / DSM 46492 / JCM 5070 / NBRC 14893 / NCIMB 12804 / NRRL 8165 / MA-4680).